A 248-amino-acid chain; its full sequence is Pyridoxine 5'-phosphate synthase (248 aa).

Asn7 contacts 3-amino-2-oxopropyl phosphate. 9–10 (DH) lines the 1-deoxy-D-xylulose 5-phosphate pocket. Arg18 is a binding site for 3-amino-2-oxopropyl phosphate. The active-site Proton acceptor is His52. Residues Arg54 and His59 each coordinate 1-deoxy-D-xylulose 5-phosphate. Glu79 (proton acceptor) is an active-site residue. Thr109 serves as a coordination point for 1-deoxy-D-xylulose 5-phosphate. Residue His201 is the Proton donor of the active site. 3-amino-2-oxopropyl phosphate contacts are provided by residues Gly202 and 223–224 (GH).

The protein belongs to the PNP synthase family. In terms of assembly, homooctamer; tetramer of dimers.

It is found in the cytoplasm. The catalysed reaction is 3-amino-2-oxopropyl phosphate + 1-deoxy-D-xylulose 5-phosphate = pyridoxine 5'-phosphate + phosphate + 2 H2O + H(+). Its pathway is cofactor biosynthesis; pyridoxine 5'-phosphate biosynthesis; pyridoxine 5'-phosphate from D-erythrose 4-phosphate: step 5/5. Catalyzes the complicated ring closure reaction between the two acyclic compounds 1-deoxy-D-xylulose-5-phosphate (DXP) and 3-amino-2-oxopropyl phosphate (1-amino-acetone-3-phosphate or AAP) to form pyridoxine 5'-phosphate (PNP) and inorganic phosphate. The chain is Pyridoxine 5'-phosphate synthase from Opitutus terrae (strain DSM 11246 / JCM 15787 / PB90-1).